The following is an 81-amino-acid chain: Small ribosomal subunit protein bS16 (81 aa).

It belongs to the bacterial ribosomal protein bS16 family.

The chain is Small ribosomal subunit protein bS16 from Phytoplasma mali (strain AT).